We begin with the raw amino-acid sequence, 444 residues long: Tubulin beta chain (444 aa).

The short motif at 1–4 (MREI) is the MREI motif element. Gln11 is a GTP binding site. Residue Ser40 is modified to Phosphoserine. The residue at position 55 (Thr55) is a Phosphothreonine. An N6-acetyllysine; alternate modification is found at Lys58. Lys58 carries the post-translational modification N6-succinyllysine; alternate. Lys58 is covalently cross-linked (Glycyl lysine isopeptide (Lys-Gly) (interchain with G-Cter in ubiquitin); alternate). Residues Glu69, Ser138, Gly142, Thr143, and Gly144 each coordinate GTP. Glu69 serves as a coordination point for Mg(2+). Residue Ser172 is modified to Phosphoserine; by CDK1. Positions 204 and 226 each coordinate GTP. Phosphothreonine occurs at positions 285 and 290. Omega-N-methylarginine is present on Arg318. Lys324 is covalently cross-linked (Glycyl lysine isopeptide (Lys-Gly) (interchain with G-Cter in ubiquitin)). Residues 423–444 (QQYQDATAEEEEDFGEEAEEEA) are disordered. Residues 429–444 (TAEEEEDFGEEAEEEA) are compositionally biased toward acidic residues. A 5-glutamyl polyglutamate mark is found at Glu434, Glu438, Glu439, and Glu441. Glu438, Glu439, Glu441, Glu442, and Glu443 each carry 5-glutamyl glycine.

It belongs to the tubulin family. In terms of assembly, heterodimer of alpha and beta chains. A typical microtubule is a hollow water-filled tube with an outer diameter of 25 nm and an inner diameter of 15 nM. Alpha-beta heterodimers associate head-to-tail to form protofilaments running lengthwise along the microtubule wall with the beta-tubulin subunit facing the microtubule plus end conferring a structural polarity. Microtubules usually have 13 protofilaments but different protofilament numbers can be found in some organisms and specialized cells. Interacts with CIMAP3. Interacts with DIAPH1. Interacts with MX1. May interact with RNABP10. Interacts with CFAP157. Nascent tubulin polypeptide interacts (via beta-tubulin MREI motif) with TTC5/STRAP; this interaction results in tubulin mRNA-targeted degradation. Requires Mg(2+) as cofactor. Post-translationally, some glutamate residues at the C-terminus are polyglycylated, resulting in polyglycine chains on the gamma-carboxyl group. Glycylation is mainly limited to tubulin incorporated into axonemes (cilia and flagella) whereas glutamylation is prevalent in neuronal cells, centrioles, axonemes, and the mitotic spindle. Both modifications can coexist on the same protein on adjacent residues, and lowering polyglycylation levels increases polyglutamylation, and reciprocally. Cilia and flagella glycylation is required for their stability and maintenance. Flagella glycylation controls sperm motility. Some glutamate residues at the C-terminus are polyglutamylated, resulting in polyglutamate chains on the gamma-carboxyl group. Polyglutamylation plays a key role in microtubule severing by spastin (SPAST). SPAST preferentially recognizes and acts on microtubules decorated with short polyglutamate tails: severing activity by SPAST increases as the number of glutamates per tubulin rises from one to eight, but decreases beyond this glutamylation threshold. Glutamylation is also involved in cilia motility. In terms of processing, phosphorylated on Ser-172 by CDK1 during the cell cycle, from metaphase to telophase, but not in interphase. This phosphorylation inhibits tubulin incorporation into microtubules.

It localises to the cytoplasm. It is found in the cytoskeleton. Tubulin is the major constituent of microtubules, a cylinder consisting of laterally associated linear protofilaments composed of alpha- and beta-tubulin heterodimers. Microtubules grow by the addition of GTP-tubulin dimers to the microtubule end, where a stabilizing cap forms. Below the cap, tubulin dimers are in GDP-bound state, owing to GTPase activity of alpha-tubulin. This is Tubulin beta chain (TUBB) from Sus scrofa (Pig).